Consider the following 119-residue polypeptide: MVKRSDKVGEQIHKIISELLIKGLKDPRIGFLTITGVKMTPDLRQATVYFTVHGSDEDKKNSEAGLNSAKGYIRKEIGQALKMRFVPEVLFKYDTSLDYGQHIESILKEIGATDDGEQS.

Belongs to the RbfA family. As to quaternary structure, monomer. Binds 30S ribosomal subunits, but not 50S ribosomal subunits or 70S ribosomes.

It is found in the cytoplasm. Functionally, one of several proteins that assist in the late maturation steps of the functional core of the 30S ribosomal subunit. Associates with free 30S ribosomal subunits (but not with 30S subunits that are part of 70S ribosomes or polysomes). Required for efficient processing of 16S rRNA. May interact with the 5'-terminal helix region of 16S rRNA. This chain is Ribosome-binding factor A, found in Citrifermentans bemidjiense (strain ATCC BAA-1014 / DSM 16622 / JCM 12645 / Bem) (Geobacter bemidjiensis).